The chain runs to 524 residues: Alkaline phosphatase, tissue-nonspecific isozyme (524 aa).

The N-terminal stretch at 1–17 is a signal peptide; that stretch reads MISPFLVLAIGTCLTNS. Asp60 contacts Mg(2+). The Zn(2+) site is built by Asp60 and Ser110. The Phosphoserine intermediate role is filled by Ser110. Position 110 is a phosphoserine (Ser110). An intrachain disulfide couples Cys139 to Cys201. Asn140 is a glycosylation site (N-linked (GlcNAc...) asparagine). Thr173 lines the Mg(2+) pocket. Residue Asn230 is glycosylated (N-linked (GlcNAc...) asparagine). Glu235 serves as a coordination point for Ca(2+). Residue Asn271 is glycosylated (N-linked (GlcNAc...) asparagine). Ca(2+)-binding residues include Phe290 and Glu291. A glycan (N-linked (GlcNAc...) asparagine) is linked at Asn302. Asp306 contributes to the Ca(2+) binding site. Residue Glu332 coordinates Mg(2+). The Zn(2+) site is built by Asp337, His341, Asp378, and His379. A glycan (N-linked (GlcNAc...) asparagine) is linked at Asn430. His454 lines the Zn(2+) pocket. Cys489 and Cys497 are oxidised to a cystine. The GPI-anchor amidated serine moiety is linked to residue Ser499. Positions 500-524 are cleaved as a propeptide — removed in mature form; it reads ASSAGGPSPGPLFLLLALPSLGILF.

Belongs to the alkaline phosphatase family. In terms of assembly, homodimer. Mg(2+) is required as a cofactor. The cofactor is Zn(2+). Requires Ca(2+) as cofactor. In terms of processing, N-glycosylated.

It localises to the cell membrane. The protein resides in the extracellular vesicle membrane. Its subcellular location is the mitochondrion membrane. It is found in the mitochondrion intermembrane space. It carries out the reaction a phosphate monoester + H2O = an alcohol + phosphate. The catalysed reaction is diphosphate + H2O = 2 phosphate + H(+). It catalyses the reaction pyridoxal 5'-phosphate + H2O = pyridoxal + phosphate. The enzyme catalyses phosphoethanolamine + H2O = ethanolamine + phosphate. It carries out the reaction N-phosphocreatine + H2O = creatine + phosphate. The catalysed reaction is ATP + H2O = ADP + phosphate + H(+). It catalyses the reaction ADP + H2O = AMP + phosphate + H(+). The enzyme catalyses AMP + H2O = adenosine + phosphate. Phosphatase activity is specifically inhibited by 5-((5-chloro-2-methoxyphenyl)sulfonamido)nicotinamide (SBI-425). In terms of biological role, alkaline phosphatase that metabolizes various phosphate compounds and plays a key role in skeletal mineralization and adaptive thermogenesis. Has broad substrate specificity and can hydrolyze a considerable variety of compounds: however, only a few substrates, such as diphosphate (inorganic pyrophosphate; PPi), pyridoxal 5'-phosphate (PLP) and N-phosphocreatine are natural substrates. Plays an essential role in skeletal and dental mineralization via its ability to hydrolyze extracellular diphosphate, a potent mineralization inhibitor, to phosphate: it thereby promotes hydroxyapatite crystal formation and increases inorganic phosphate concentration. Acts in a non-redundant manner with PHOSPHO1 in skeletal mineralization: while PHOSPHO1 mediates the initiation of hydroxyapatite crystallization in the matrix vesicles (MVs), ALPL/TNAP catalyzes the spread of hydroxyapatite crystallization in the extracellular matrix. Also promotes dephosphorylation of osteopontin (SSP1), an inhibitor of hydroxyapatite crystallization in its phosphorylated state; it is however unclear whether ALPL/TNAP mediates SSP1 dephosphorylation via a direct or indirect manner. Catalyzes dephosphorylation of PLP to pyridoxal (PL), the transportable form of vitamin B6, in order to provide a sufficient amount of PLP in the brain, an essential cofactor for enzymes catalyzing the synthesis of diverse neurotransmitters. Additionally, also able to mediate ATP degradation in a stepwise manner to adenosine, thereby regulating the availability of ligands for purinergic receptors. Also capable of dephosphorylating microbial products, such as lipopolysaccharides (LPS) as well as other phosphorylated small-molecules, such as poly-inosine:cytosine (poly I:C). Acts as a key regulator of adaptive thermogenesis as part of the futile creatine cycle: localizes to the mitochondria of thermogenic fat cells and acts by mediating hydrolysis of N-phosphocreatine to initiate a futile cycle of creatine dephosphorylation and phosphorylation. During the futile creatine cycle, creatine and N-phosphocreatine are in a futile cycle, which dissipates the high energy charge of N-phosphocreatine as heat without performing any mechanical or chemical work. In Felis catus (Cat), this protein is Alkaline phosphatase, tissue-nonspecific isozyme (ALPL).